Here is a 182-residue protein sequence, read N- to C-terminus: Homeobox expressed in ES cells 1-A (182 aa).

The homeobox DNA-binding region spans 103 to 163; the sequence is YRGRRPRTAF…QNRRAKLKRS (61 aa).

It belongs to the ANF homeobox family. In terms of tissue distribution, initially expressed in the anterior dorsal region of early embryos and later exclusively in the primordium of the anterior pituitary gland.

The protein resides in the nucleus. Its function is as follows. Appears to be involved in the regional specification of the anterior head of Xenopus embryos. The chain is Homeobox expressed in ES cells 1-A (hesx1-a) from Xenopus laevis (African clawed frog).